The following is a 1390-amino-acid chain: DNA-directed RNA polymerase subunit beta (1390 aa).

It belongs to the RNA polymerase beta chain family. As to quaternary structure, the RNAP catalytic core consists of 2 alpha, 1 beta, 1 beta' and 1 omega subunit. When a sigma factor is associated with the core the holoenzyme is formed, which can initiate transcription.

The enzyme catalyses RNA(n) + a ribonucleoside 5'-triphosphate = RNA(n+1) + diphosphate. In terms of biological role, DNA-dependent RNA polymerase catalyzes the transcription of DNA into RNA using the four ribonucleoside triphosphates as substrates. The chain is DNA-directed RNA polymerase subunit beta from Chromobacterium violaceum (strain ATCC 12472 / DSM 30191 / JCM 1249 / CCUG 213 / NBRC 12614 / NCIMB 9131 / NCTC 9757 / MK).